Consider the following 284-residue polypeptide: GPN-loop GTPase 3 (284 aa).

13–18 (GSGKST) lines the GTP pocket. The Gly-Pro-Asn (GPN)-loop; involved in dimer interface motif lies at 72–74 (GPN). 174-177 (TKMD) is a GTP binding site. Positions 261–284 (KEPKEHEDESSSMFDEYFQEHQNE) are disordered.

It belongs to the GPN-loop GTPase family. Heterodimer with GPN1. Binds to RNA polymerase II (RNAPII). Interacts directly with subunits RPB4 and RPB7 and the CTD of RPB1.

Its function is as follows. Small GTPase required for proper localization of RNA polymerase II (RNAPII). May act at an RNAP assembly step prior to nuclear import. This is GPN-loop GTPase 3 from Bos taurus (Bovine).